Reading from the N-terminus, the 271-residue chain is Proteasome inhibitor PI31 subunit (271 aa).

At alanine 2 the chain carries N-acetylalanine. An important for homodimerization and interaction with FBXO7 region spans residues 2–150 (AGLEVLFASA…PIHEQWEKAN (149 aa)). Serine 153 bears the Phosphoserine mark. Arginine 205 bears the Omega-N-methylarginine mark. Arginine 219 is modified (asymmetric dimethylarginine). Residues 222–271 (IDPSSGLPNRLPPGAVPPGARFDPFGPIGTSPPGPNPDHLPPPGYDDMYL) are disordered. The residue at position 231 (arginine 231) is an Omega-N-methylarginine. Pro residues predominate over residues 251–265 (TSPPGPNPDHLPPPG). Serine 252 is modified (phosphoserine).

Belongs to the proteasome inhibitor PI31 family. Monomer and homodimer. Interacts with FBXO7. Interacts with the 20S proteasome.

It localises to the cytoplasm. It is found in the endoplasmic reticulum. Its function is as follows. Plays an important role in control of proteasome function. Inhibits the hydrolysis of protein and peptide substrates by the 20S proteasome. Also inhibits the activation of the proteasome by the proteasome regulatory proteins PA700 and PA28. The sequence is that of Proteasome inhibitor PI31 subunit (PSMF1) from Homo sapiens (Human).